Consider the following 224-residue polypeptide: UPF0758 protein Avin_02940 (224 aa).

In terms of domain architecture, MPN spans 102–224; that stretch reads ALESPQAVRD…PLSMAEQGWL (123 aa). Zn(2+) contacts are provided by His-173, His-175, and Asp-186. Positions 173-186 match the JAMM motif motif; sequence HNHPSGIAEPSQAD.

The protein belongs to the UPF0758 family.

The polypeptide is UPF0758 protein Avin_02940 (Azotobacter vinelandii (strain DJ / ATCC BAA-1303)).